We begin with the raw amino-acid sequence, 343 residues long: L-threonine 3-dehydrogenase (343 aa).

Position 38 (cysteine 38) interacts with Zn(2+). Active-site charge relay system residues include threonine 40 and histidine 43. Histidine 63, glutamate 64, cysteine 93, cysteine 96, cysteine 99, and cysteine 107 together coordinate Zn(2+). NAD(+) is bound by residues isoleucine 175, aspartate 195, arginine 200, 262–264, and 286–287; these read LGI and IY.

It belongs to the zinc-containing alcohol dehydrogenase family. As to quaternary structure, homotetramer. Requires Zn(2+) as cofactor.

It is found in the cytoplasm. The catalysed reaction is L-threonine + NAD(+) = (2S)-2-amino-3-oxobutanoate + NADH + H(+). Its pathway is amino-acid degradation; L-threonine degradation via oxydo-reductase pathway; glycine from L-threonine: step 1/2. In terms of biological role, catalyzes the NAD(+)-dependent oxidation of L-threonine to 2-amino-3-ketobutyrate. This is L-threonine 3-dehydrogenase from Burkholderia thailandensis (strain ATCC 700388 / DSM 13276 / CCUG 48851 / CIP 106301 / E264).